The chain runs to 116 residues: MADLIPLAQARCVPRKGSDHKLGEARLAELLPQIPGWELSEGGQALSRTFRFKDYYATMAFVNALAWIAHREDHHPDLGVHYDRAVVRFSTHDVGGLSENDFICAAKTSALTEQLP.

The protein belongs to the pterin-4-alpha-carbinolamine dehydratase family.

The enzyme catalyses (4aS,6R)-4a-hydroxy-L-erythro-5,6,7,8-tetrahydrobiopterin = (6R)-L-erythro-6,7-dihydrobiopterin + H2O. The polypeptide is Putative pterin-4-alpha-carbinolamine dehydratase (Stenotrophomonas maltophilia (strain K279a)).